Here is a 311-residue protein sequence, read N- to C-terminus: Porphobilinogen deaminase (311 aa).

At cysteine 242 the chain carries S-(dipyrrolylmethanemethyl)cysteine.

Belongs to the HMBS family. In terms of assembly, monomer. The cofactor is dipyrromethane.

It carries out the reaction 4 porphobilinogen + H2O = hydroxymethylbilane + 4 NH4(+). Its pathway is porphyrin-containing compound metabolism; protoporphyrin-IX biosynthesis; coproporphyrinogen-III from 5-aminolevulinate: step 2/4. Its function is as follows. Tetrapolymerization of the monopyrrole PBG into the hydroxymethylbilane pre-uroporphyrinogen in several discrete steps. This is Porphobilinogen deaminase from Baumannia cicadellinicola subsp. Homalodisca coagulata.